Consider the following 469-residue polypeptide: 3-isopropylmalate dehydratase large subunit (469 aa).

[4Fe-4S] cluster is bound by residues C350, C410, and C413.

It belongs to the aconitase/IPM isomerase family. LeuC type 1 subfamily. Heterodimer of LeuC and LeuD. [4Fe-4S] cluster serves as cofactor.

It carries out the reaction (2R,3S)-3-isopropylmalate = (2S)-2-isopropylmalate. It participates in amino-acid biosynthesis; L-leucine biosynthesis; L-leucine from 3-methyl-2-oxobutanoate: step 2/4. Its function is as follows. Catalyzes the isomerization between 2-isopropylmalate and 3-isopropylmalate, via the formation of 2-isopropylmaleate. The protein is 3-isopropylmalate dehydratase large subunit of Rhodopseudomonas palustris (strain TIE-1).